Consider the following 185-residue polypeptide: Ribosome maturation factor RimM (185 aa).

Residues 92 to 168 enclose the PRC barrel domain; the sequence is DDDTFYHADL…GRRVVVAEAF (77 aa).

This sequence belongs to the RimM family. Binds ribosomal protein uS19.

Its subcellular location is the cytoplasm. Its function is as follows. An accessory protein needed during the final step in the assembly of 30S ribosomal subunit, possibly for assembly of the head region. Essential for efficient processing of 16S rRNA. May be needed both before and after RbfA during the maturation of 16S rRNA. It has affinity for free ribosomal 30S subunits but not for 70S ribosomes. The chain is Ribosome maturation factor RimM from Xanthobacter autotrophicus (strain ATCC BAA-1158 / Py2).